A 382-amino-acid chain; its full sequence is Galactokinase (382 aa).

A substrate-binding site is contributed by 34 to 37; sequence EHTD. 124-130 is an ATP binding site; the sequence is GAGLSSS. Mg(2+) is bound by residues Ser130 and Glu162. Asp174 functions as the Proton acceptor in the catalytic mechanism. Tyr223 lines the substrate pocket.

The protein belongs to the GHMP kinase family. GalK subfamily.

It localises to the cytoplasm. It carries out the reaction alpha-D-galactose + ATP = alpha-D-galactose 1-phosphate + ADP + H(+). It functions in the pathway carbohydrate metabolism; galactose metabolism. Its function is as follows. Catalyzes the transfer of the gamma-phosphate of ATP to D-galactose to form alpha-D-galactose-1-phosphate (Gal-1-P). This chain is Galactokinase, found in Salmonella arizonae (strain ATCC BAA-731 / CDC346-86 / RSK2980).